Here is a 280-residue protein sequence, read N- to C-terminus: Putative transcription factor kapC (280 aa).

Positions 1 to 102 (MQPALAPHPS…GKRPLSTSKR (102 aa)) are disordered. Pro residues predominate over residues 39-49 (PQPPAPQPPHM). The span at 79–89 (TQPDVTGQETP) shows a compositional bias: polar residues. The bZIP domain occupies 96–159 (PLSTSKRAAQ…EYIINLQSRL (64 aa)). Residues 97 to 120 (LSTSKRAAQNRAAQRAFRQRKEAH) form a basic motif region. The leucine-zipper stretch occupies residues 124 to 155 (LEGKVKAYESMGEAIKALQAENYQLREYIINL). Positions 169–280 (LPGNIDLSQP…EQTHGLPLIS (112 aa)) are disordered. A compositionally biased stretch (pro residues) spans 197–206 (APPPTAPQQP).

It belongs to the bZIP family.

Its subcellular location is the nucleus. Its function is as follows. Putative transcription factor. The chain is Putative transcription factor kapC (kapC) from Aspergillus fumigatus (strain ATCC MYA-4609 / CBS 101355 / FGSC A1100 / Af293) (Neosartorya fumigata).